An 820-amino-acid chain; its full sequence is Penicillin-binding protein 1A (820 aa).

The interval 1–120 (MNSDGRHHQS…PAGRLPQPRV (120 aa)) is disordered. The segment covering 41 to 53 (TDDRSAPHADSIE) has biased composition (basic and acidic residues). A helical membrane pass occupies residues 139 to 159 (LTAAVVILLPMVTFTMAYLIV). The segment at 180 to 360 (GSEIAKIVPP…RWNWVLDGMV (181 aa)) is transglycosylase. Glutamate 213 (proton donor; for transglycosylase activity) is an active-site residue. Residues 453–743 (AVVSIDPHNG…PSDIWKATMD (291 aa)) form a transpeptidase region. Serine 487 acts as the Acyl-ester intermediate; for transpeptidase activity in catalysis. The span at 792 to 804 (ITIPIGPPTTITL) shows a compositional bias: low complexity. The disordered stretch occupies residues 792–820 (ITIPIGPPTTITLAPPPPAPPAATPTPPP). Over residues 805-820 (APPPPAPPAATPTPPP) the composition is skewed to pro residues.

In the N-terminal section; belongs to the glycosyltransferase 51 family. The protein in the C-terminal section; belongs to the transpeptidase family. In terms of assembly, interacts with RipA via its transpeptidase domain (residues 561-820).

It localises to the cell membrane. The enzyme catalyses [GlcNAc-(1-&gt;4)-Mur2Ac(oyl-L-Ala-gamma-D-Glu-L-Lys-D-Ala-D-Ala)](n)-di-trans,octa-cis-undecaprenyl diphosphate + beta-D-GlcNAc-(1-&gt;4)-Mur2Ac(oyl-L-Ala-gamma-D-Glu-L-Lys-D-Ala-D-Ala)-di-trans,octa-cis-undecaprenyl diphosphate = [GlcNAc-(1-&gt;4)-Mur2Ac(oyl-L-Ala-gamma-D-Glu-L-Lys-D-Ala-D-Ala)](n+1)-di-trans,octa-cis-undecaprenyl diphosphate + di-trans,octa-cis-undecaprenyl diphosphate + H(+). The catalysed reaction is Preferential cleavage: (Ac)2-L-Lys-D-Ala-|-D-Ala. Also transpeptidation of peptidyl-alanyl moieties that are N-acyl substituents of D-alanine.. It functions in the pathway cell wall biogenesis; peptidoglycan biosynthesis. Its function is as follows. Cell wall formation. Synthesis of cross-linked peptidoglycan from the lipid intermediates. The enzyme has a penicillin-insensitive transglycosylase N-terminal domain (formation of linear glycan strands) and a penicillin-sensitive transpeptidase C-terminal domain (cross-linking of the peptide subunits). Has little peptidoglycan hydrolytic activity; however it inhibits the synergistic peptidoglycan hydrolysis of RipA plus RpfB. The protein is Penicillin-binding protein 1A (ponA1) of Mycobacterium tuberculosis (strain ATCC 25618 / H37Rv).